A 162-amino-acid polypeptide reads, in one-letter code: Allantoicase (162 aa).

Belongs to the allantoicase family. In terms of assembly, homohexamer. As to expression, expressed in zygote.

The catalysed reaction is allantoate + H2O = (S)-ureidoglycolate + urea. It participates in nitrogen metabolism; (S)-allantoin degradation; (S)-ureidoglycolate from allantoate (aminidohydrolase route): step 1/1. Functionally, catalyzes the degradation of allantoate to (-)-ureidoglycolate and (+)-ureidoglycolate to glyoxylate. The chain is Allantoicase from Chlamydomonas reinhardtii (Chlamydomonas smithii).